A 264-amino-acid chain; its full sequence is Protein ADMETOS (264 aa).

In terms of tissue distribution, paternally imprinted expression in the endosperm.

In terms of biological role, product of a dosage-sensitive gene that contributes to the maintenance of paternally and maternally imprinted gene expression in the endosperm in order to balance parental contributions. Underlies postzygotic reproductive isolation by promoting triploid seed arrest in a genetic dosage-dependent manner, thus being a component of postzygotic interploidy hybridization barriers. The chain is Protein ADMETOS from Arabidopsis thaliana (Mouse-ear cress).